Consider the following 380-residue polypeptide: Probable tRNA sulfurtransferase (380 aa).

Residues 58–162 (EEVIERLKKV…MAFVYAGVIE (105 aa)) enclose the THUMP domain. Residues 178–179 (LL), 203–204 (YF), Arg-260, Gly-282, and Gln-291 each bind ATP.

Belongs to the ThiI family.

Its subcellular location is the cytoplasm. It catalyses the reaction [ThiI sulfur-carrier protein]-S-sulfanyl-L-cysteine + a uridine in tRNA + 2 reduced [2Fe-2S]-[ferredoxin] + ATP + H(+) = [ThiI sulfur-carrier protein]-L-cysteine + a 4-thiouridine in tRNA + 2 oxidized [2Fe-2S]-[ferredoxin] + AMP + diphosphate. The enzyme catalyses [ThiS sulfur-carrier protein]-C-terminal Gly-Gly-AMP + S-sulfanyl-L-cysteinyl-[cysteine desulfurase] + AH2 = [ThiS sulfur-carrier protein]-C-terminal-Gly-aminoethanethioate + L-cysteinyl-[cysteine desulfurase] + A + AMP + 2 H(+). The protein operates within cofactor biosynthesis; thiamine diphosphate biosynthesis. Catalyzes the ATP-dependent transfer of a sulfur to tRNA to produce 4-thiouridine in position 8 of tRNAs, which functions as a near-UV photosensor. Also catalyzes the transfer of sulfur to the sulfur carrier protein ThiS, forming ThiS-thiocarboxylate. This is a step in the synthesis of thiazole, in the thiamine biosynthesis pathway. The sulfur is donated as persulfide by IscS. This is Probable tRNA sulfurtransferase from Thermoanaerobacter sp. (strain X514).